A 293-amino-acid chain; its full sequence is Protein BOBBER 2 (293 aa).

N-acetylalanine is present on A2. Residues E50–M80 adopt a coiled-coil conformation. Composition is skewed to basic and acidic residues over residues A67–S102 and E110–S120. The disordered stretch occupies residues A67–P125. The CS domain maps to L131–V220.

It is found in the cytoplasm. The protein localises to the cytoplasmic granule. Its function is as follows. Small heat shock protein required for the establishment of auxin gradients and for patterning of the apical domain of the embryo. Involved in the specification of the cotyledon primordia. Also required for normal inflorescence and floral meristem function, normal developmental patterning and thermotolerance. Acts as a molecular chaperone. The sequence is that of Protein BOBBER 2 (BOB2) from Arabidopsis thaliana (Mouse-ear cress).